Reading from the N-terminus, the 651-residue chain is DNA topoisomerase 3 (651 aa).

The Toprim domain maps to 1 to 134; sequence MRLFIAEKPS…KRDKILRCLI (134 aa). Positions 7, 103, and 105 each coordinate Mg(2+). The region spanning 155-612 is the Topo IA-type catalytic domain; it reads FIPLATSALA…NLNQILPDLV (458 aa). Residues 194-199 are interaction with DNA; sequence SVGRVQ. Tyr-337 (O-(5'-phospho-DNA)-tyrosine intermediate) is an active-site residue. Residues 631 to 651 are disordered; the sequence is SDRAKPKSAVKKSSKSNGETD.

Belongs to the type IA topoisomerase family. Mg(2+) is required as a cofactor.

The catalysed reaction is ATP-independent breakage of single-stranded DNA, followed by passage and rejoining.. Functionally, releases the supercoiling and torsional tension of DNA, which is introduced during the DNA replication and transcription, by transiently cleaving and rejoining one strand of the DNA duplex. Introduces a single-strand break via transesterification at a target site in duplex DNA. The scissile phosphodiester is attacked by the catalytic tyrosine of the enzyme, resulting in the formation of a DNA-(5'-phosphotyrosyl)-enzyme intermediate and the expulsion of a 3'-OH DNA strand. The free DNA strand then undergoes passage around the unbroken strand, thus removing DNA supercoils. Finally, in the religation step, the DNA 3'-OH attacks the covalent intermediate to expel the active-site tyrosine and restore the DNA phosphodiester backbone. This chain is DNA topoisomerase 3, found in Haemophilus influenzae (strain ATCC 51907 / DSM 11121 / KW20 / Rd).